A 159-amino-acid polypeptide reads, in one-letter code: Transcription elongation factor GreA (159 aa).

Residues 1 to 76 (MAEEKEVVLT…SLEKTLKKAR (76 aa)) are a coiled coil.

Belongs to the GreA/GreB family.

Its function is as follows. Necessary for efficient RNA polymerase transcription elongation past template-encoded arresting sites. The arresting sites in DNA have the property of trapping a certain fraction of elongating RNA polymerases that pass through, resulting in locked ternary complexes. Cleavage of the nascent transcript by cleavage factors such as GreA or GreB allows the resumption of elongation from the new 3'terminus. GreA releases sequences of 2 to 3 nucleotides. In Syntrophomonas wolfei subsp. wolfei (strain DSM 2245B / Goettingen), this protein is Transcription elongation factor GreA.